A 501-amino-acid chain; its full sequence is Ribose import ATP-binding protein RbsA (501 aa).

ABC transporter domains follow at residues 5 to 241 (LQLK…VGRK) and 252 to 495 (APGD…VGKL). 37 to 44 (GENGAGKS) serves as a coordination point for ATP.

Belongs to the ABC transporter superfamily. Ribose importer (TC 3.A.1.2.1) family. As to quaternary structure, the complex is composed of an ATP-binding protein (RbsA), two transmembrane proteins (RbsC) and a solute-binding protein (RbsB).

It is found in the cell inner membrane. The catalysed reaction is D-ribose(out) + ATP + H2O = D-ribose(in) + ADP + phosphate + H(+). Part of the ABC transporter complex RbsABC involved in ribose import. Responsible for energy coupling to the transport system. The protein is Ribose import ATP-binding protein RbsA of Escherichia coli (strain UTI89 / UPEC).